The following is a 113-amino-acid chain: Sperm-associated antigen 11B (113 aa).

The first 26 residues, 1–26 (MIPRLLPFFASLLFAALLFPGLSNAS), serve as a signal peptide directing secretion. Cystine bridges form between cysteine 80–cysteine 108, cysteine 87–cysteine 101, and cysteine 91–cysteine 109.

It belongs to the beta-defensin family.

It localises to the secreted. Functionally, has antimicrobial activity against E.coli. Plays a role in the defense response in the male reproductive tract, contributing to sperm maturation, storage and protection. In Mus musculus (Mouse), this protein is Sperm-associated antigen 11B.